We begin with the raw amino-acid sequence, 311 residues long: Lipoyl synthase (311 aa).

7 residues coordinate [4Fe-4S] cluster: C55, C60, C66, C81, C85, C88, and S292. A Radical SAM core domain is found at 67-281 (WEDREATFLI…ARFAEGLGFA (215 aa)).

The protein belongs to the radical SAM superfamily. Lipoyl synthase family. The cofactor is [4Fe-4S] cluster.

It is found in the cytoplasm. It carries out the reaction [[Fe-S] cluster scaffold protein carrying a second [4Fe-4S](2+) cluster] + N(6)-octanoyl-L-lysyl-[protein] + 2 oxidized [2Fe-2S]-[ferredoxin] + 2 S-adenosyl-L-methionine + 4 H(+) = [[Fe-S] cluster scaffold protein] + N(6)-[(R)-dihydrolipoyl]-L-lysyl-[protein] + 4 Fe(3+) + 2 hydrogen sulfide + 2 5'-deoxyadenosine + 2 L-methionine + 2 reduced [2Fe-2S]-[ferredoxin]. The protein operates within protein modification; protein lipoylation via endogenous pathway; protein N(6)-(lipoyl)lysine from octanoyl-[acyl-carrier-protein]: step 2/2. Functionally, catalyzes the radical-mediated insertion of two sulfur atoms into the C-6 and C-8 positions of the octanoyl moiety bound to the lipoyl domains of lipoate-dependent enzymes, thereby converting the octanoylated domains into lipoylated derivatives. The polypeptide is Lipoyl synthase (Mycobacterium bovis (strain ATCC BAA-935 / AF2122/97)).